Consider the following 415-residue polypeptide: Ribulose bisphosphate carboxylase/oxygenase activase (415 aa).

An ATP-binding site is contributed by 37–44; that stretch reads GRKGEGKT.

Belongs to the RuBisCO activase family.

In terms of biological role, activation of RuBisCO (ribulose-1,5-bisohosphate carboxylase/oxygenase; EC 4.1.1.39) involves the ATP-dependent carboxylation of the epsilon-amino group of lysine leading to a carbamate structure. The chain is Ribulose bisphosphate carboxylase/oxygenase activase (rca) from Anabaena sp. (strain CA / ATCC 33047).